The sequence spans 220 residues: Cysteine-rich venom protein VAR5 (220 aa).

An N-terminal signal peptide occupies residues 1–22 (MILLKLYLTLAAILCQSRGTTS). The SCP domain occupies 41 to 169 (NKHNDLRRTV…PLKYFLVCQY (129 aa)). Cystine bridges form between C77–C156, C95–C170, C151–C167, C189–C196, and C192–C201. The 16-residue stretch at 205-220 (CEHSNQYINCPDLTKQ) folds into the ShKT domain.

The protein belongs to the CRISP family. Contains 8 disulfide bonds. In terms of tissue distribution, expressed by the venom gland.

Its subcellular location is the secreted. Blocks ryanodine receptors, and potassium channels. The sequence is that of Cysteine-rich venom protein VAR5 from Varanus acanthurus (Ridge-tailed monitor).